The sequence spans 244 residues: 5-oxoprolinase subunit A (244 aa).

The protein belongs to the LamB/PxpA family. As to quaternary structure, forms a complex composed of PxpA, PxpB and PxpC.

The catalysed reaction is 5-oxo-L-proline + ATP + 2 H2O = L-glutamate + ADP + phosphate + H(+). In terms of biological role, catalyzes the cleavage of 5-oxoproline to form L-glutamate coupled to the hydrolysis of ATP to ADP and inorganic phosphate. The sequence is that of 5-oxoprolinase subunit A from Shigella sonnei (strain Ss046).